A 291-amino-acid chain; its full sequence is START domain-containing protein 10 (291 aa).

M1 is modified (N-acetylmethionine). The interval 1–23 (MEKPAASTEPQGSRPALGRESVQ) is disordered. The START domain occupies 14 to 224 (RPALGRESVQ…MYKACIKYPE (211 aa)). K94, K197, and K202 each carry N6-succinyllysine. Residues S253, S259, S284, and S289 each carry the phosphoserine modification. Residues 260–291 (LENIDESAVTESREERAGGAGGEGSDDDTSLT) are disordered.

Post-translationally, phosphorylation at Ser-284 by CK2 negatively regulates lipid transfer activity, possibly by decreasing membrane association. In terms of tissue distribution, testis, kidney, liver, and intestine with the highest level in the testis.

It is found in the cell projection. The protein resides in the cilium. Its subcellular location is the flagellum. It localises to the cytoplasm. The protein localises to the membrane. In terms of biological role, phospholipid transfer protein that preferentially selects lipid species containing a palmitoyl or stearoyl chain on the sn-1 and an unsaturated fatty acyl chain (18:1 or 18:2) on the sn-2 position. Able to transfer phosphatidylcholine (PC) and phosphatidyetanolamline (PE) between membranes. May play metabolic roles in sperm maturation or fertilization. This is START domain-containing protein 10 (Stard10) from Mus musculus (Mouse).